A 50-amino-acid polypeptide reads, in one-letter code: Small, acid-soluble spore protein P (50 aa).

Residues 1 to 50 form a disordered region; the sequence is MSKRKMGPKQQKNPELPKSPEQPYGEPLSGSKKEKKANHSGQKHNPHHGL. Positions 33–50 are enriched in basic residues; it reads KEKKANHSGQKHNPHHGL.

It belongs to the SspP family.

The protein resides in the spore core. This chain is Small, acid-soluble spore protein P, found in Oceanobacillus iheyensis (strain DSM 14371 / CIP 107618 / JCM 11309 / KCTC 3954 / HTE831).